Here is a 260-residue protein sequence, read N- to C-terminus: Lysine/arginine/ornithine-binding periplasmic protein (260 aa).

Residues 1-22 (MKKSILALSLLVGLSTAASSYA) form the signal peptide. L-arginine is bound at residue D33. D33 lines the L-lysine pocket. L-ornithine is bound at residue D33. The cysteines at positions 60 and 67 are disulfide-linked. L-arginine contacts are provided by S91, S92, S94, R99, T143, and D183. L-ornithine-binding residues include S91, S92, S94, R99, T143, and D183. Residues S92, S94, R99, and T143 each coordinate L-lysine.

This sequence belongs to the bacterial solute-binding protein 3 family. The complex is composed of two ATP-binding proteins (HisP), two transmembrane proteins (HisM and HisQ) and a solute-binding protein (ArgT).

The protein localises to the periplasm. In terms of biological role, part of the ABC transporter complex HisPMQ-ArgT involved in lysine/arginine/ornithine transport. Binds lysine, arginine and ornithine. Stimulates ATPase activity of HisP. This is Lysine/arginine/ornithine-binding periplasmic protein (argT) from Escherichia coli (strain K12).